The chain runs to 203 residues: Small ribosomal subunit protein uS4 (203 aa).

The S4 RNA-binding domain occupies 93-156 (RRLDNVVYRL…MKVPAILEAV (64 aa)).

Belongs to the universal ribosomal protein uS4 family. As to quaternary structure, part of the 30S ribosomal subunit. Contacts protein S5. The interaction surface between S4 and S5 is involved in control of translational fidelity.

One of the primary rRNA binding proteins, it binds directly to 16S rRNA where it nucleates assembly of the body of the 30S subunit. Its function is as follows. With S5 and S12 plays an important role in translational accuracy. This Streptococcus pyogenes serotype M4 (strain MGAS10750) protein is Small ribosomal subunit protein uS4.